A 158-amino-acid polypeptide reads, in one-letter code: ATP synthase subunit b', chloroplastic (158 aa).

A helical transmembrane segment spans residues 21–41 (GTLPLMALQFLILMLLLNTIF).

It belongs to the ATPase B chain family. F-type ATPases have 2 components, F(1) - the catalytic core - and F(0) - the membrane proton channel. F(1) has five subunits: alpha(3), beta(3), gamma(1), delta(1), epsilon(1). F(0) has four main subunits: a(1), b(1), b'(1) and c(10-14). The alpha and beta chains form an alternating ring which encloses part of the gamma chain. F(1) is attached to F(0) by a central stalk formed by the gamma and epsilon chains, while a peripheral stalk is formed by the delta, b and b' chains.

The protein localises to the plastid. The protein resides in the chloroplast thylakoid membrane. Functionally, f(1)F(0) ATP synthase produces ATP from ADP in the presence of a proton or sodium gradient. F-type ATPases consist of two structural domains, F(1) containing the extramembraneous catalytic core and F(0) containing the membrane proton channel, linked together by a central stalk and a peripheral stalk. During catalysis, ATP synthesis in the catalytic domain of F(1) is coupled via a rotary mechanism of the central stalk subunits to proton translocation. Component of the F(0) channel, it forms part of the peripheral stalk, linking F(1) to F(0). The b'-subunit is a diverged and duplicated form of b found in plants and photosynthetic bacteria. The chain is ATP synthase subunit b', chloroplastic from Porphyra purpurea (Red seaweed).